A 1003-amino-acid polypeptide reads, in one-letter code: Calcium-transporting ATPase sarcoplasmic/endoplasmic reticulum type (1003 aa).

Residues 1–59 (MEDAHAKKWEEVVDYFGVDPERGLALEQVKKNQEKYGPNELPAEEGKSLLTLILEQFDD) lie on the Cytoplasmic side of the membrane. The chain crosses the membrane as a helical span at residues 60–78 (LLVKILLLAAIISLVLALF). Topologically, residues 79-89 (EEHDDEAEQLT) are extracellular. The helical transmembrane segment at 90-110 (AYVEPFVILLILIANAVVGVW) threads the bilayer. Over 111–262 (QEKNAESAIE…QQKLDEFGEQ (152 aa)) the chain is Cytoplasmic. Residues 263 to 282 (LSKVISVICVAVWAINIGHF) traverse the membrane as a helical segment. The Extracellular segment spans residues 283 to 300 (NDPAHGGSWIKGAIYYFK). Residues 301-318 (IAVALAVAAIPEGLPAVI) traverse the membrane as a helical segment. The Cytoplasmic segment spans residues 319–775 (TTCLALGTRR…RYLISSNIGE (457 aa)). The active-site 4-aspartylphosphate intermediate is aspartate 354. Lysine 519 provides a ligand contact to ATP. Residues 776-799 (VVSIFLTAALGLPEALIPVQLLWV) form a helical membrane-spanning segment. Residues 800–840 (NLVTDGLPATALGFNPPDLDIMNKPPRRADEGLITGWLFFR) are Extracellular-facing. Residues 841-863 (YMAIGTYVGAATVGAAAHWFMMS) form a helical membrane-spanning segment. Topologically, residues 864 to 898 (PTGPGLNFYQLSHHLQCTPENEYFEGIDCEIFSDP) are cytoplasmic. Residues 899 to 917 (HPMTMALSVLVTIEMLNAI) form a helical membrane-spanning segment. At 918 to 934 (NSLSENQSLLVMPPWSN) the chain is on the extracellular side. A helical transmembrane segment spans residues 935–954 (IWLISAICLSMTLHFVILYV). Residues 955-1003 (EILSTVFQICPLTLTEWIVVLKISFPVLLLDEVLKFVARKYTDEFSFIK) lie on the Cytoplasmic side of the membrane.

Belongs to the cation transport ATPase (P-type) (TC 3.A.3) family.

The protein localises to the sarcoplasmic reticulum membrane. It catalyses the reaction Ca(2+)(in) + ATP + H2O = Ca(2+)(out) + ADP + phosphate + H(+). In terms of biological role, this magnesium-dependent enzyme catalyzes the hydrolysis of ATP coupled with the transport of the calcium. The sequence is that of Calcium-transporting ATPase sarcoplasmic/endoplasmic reticulum type from Artemia franciscana (Brine shrimp).